The primary structure comprises 417 residues: Glutamyl-tRNA reductase (417 aa).

Residues 49–52 (TCNR), Ser105, 110–112 (ETQ), and Gln116 each bind substrate. Cys50 functions as the Nucleophile in the catalytic mechanism. 185 to 190 (GAGEMI) contacts NADP(+).

The protein belongs to the glutamyl-tRNA reductase family. Homodimer.

It carries out the reaction (S)-4-amino-5-oxopentanoate + tRNA(Glu) + NADP(+) = L-glutamyl-tRNA(Glu) + NADPH + H(+). Its pathway is porphyrin-containing compound metabolism; protoporphyrin-IX biosynthesis; 5-aminolevulinate from L-glutamyl-tRNA(Glu): step 1/2. Functionally, catalyzes the NADPH-dependent reduction of glutamyl-tRNA(Glu) to glutamate 1-semialdehyde (GSA). In Chromobacterium violaceum (strain ATCC 12472 / DSM 30191 / JCM 1249 / CCUG 213 / NBRC 12614 / NCIMB 9131 / NCTC 9757 / MK), this protein is Glutamyl-tRNA reductase.